The primary structure comprises 170 residues: Endoribonuclease YbeY (170 aa).

His-118, His-122, and His-128 together coordinate Zn(2+).

The protein belongs to the endoribonuclease YbeY family. It depends on Zn(2+) as a cofactor.

Its subcellular location is the cytoplasm. Its function is as follows. Single strand-specific metallo-endoribonuclease involved in late-stage 70S ribosome quality control and in maturation of the 3' terminus of the 16S rRNA. The sequence is that of Endoribonuclease YbeY from Mycobacteroides abscessus (strain ATCC 19977 / DSM 44196 / CCUG 20993 / CIP 104536 / JCM 13569 / NCTC 13031 / TMC 1543 / L948) (Mycobacterium abscessus).